Here is a 537-residue protein sequence, read N- to C-terminus: Eukaryotic translation initiation factor 3 subunit L (537 aa).

Basic and acidic residues predominate over residues 1–19 (MSRRVEFDLSTEDHSDRRR). Positions 1 to 30 (MSRRVEFDLSTEDHSDRRRTNTFSSSADED) are disordered. One can recognise a PCI domain in the interval 299 to 487 (EATKMFVNCL…GPSSADDDEP (189 aa)).

Belongs to the eIF-3 subunit L family. Component of the eukaryotic translation initiation factor 3 (eIF-3) complex.

The protein resides in the cytoplasm. Its function is as follows. Component of the eukaryotic translation initiation factor 3 (eIF-3) complex, which is involved in protein synthesis of a specialized repertoire of mRNAs and, together with other initiation factors, stimulates binding of mRNA and methionyl-tRNAi to the 40S ribosome. The eIF-3 complex specifically targets and initiates translation of a subset of mRNAs involved in cell proliferation. This Caenorhabditis elegans protein is Eukaryotic translation initiation factor 3 subunit L.